The following is a 1257-amino-acid chain: Phosphatidylinositol 3,4,5-trisphosphate 5-phosphatase 2 (1257 aa).

An SH2 domain is found at 21–117 (WYHRDLSRAA…GLVCALLLPV (97 aa)). Residues 119 to 132 (GEREPDPPDDRDAS) show a composition bias toward basic and acidic residues. The tract at residues 119–181 (GEREPDPPDD…ESTPNGLSTV (63 aa)) is disordered. Ser132 is modified (phosphoserine). A compositionally biased stretch (pro residues) spans 156-166 (PSSPLPAPETP). Phosphothreonine is present on Thr165. Ser241 and Ser353 each carry phosphoserine. Tyr887 carries the post-translational modification Phosphotyrosine. Ser891 is modified (phosphoserine). Residues 897-986 (TGAKSKAPSV…PPKNSFNNPA (90 aa)) form a disordered region. Residues 939–951 (PPPTGRPPAPPRA) are compositionally biased toward pro residues. The short motif at 945 to 950 (PPAPPR) is the SH3-binding element. A compositionally biased stretch (basic and acidic residues) spans 952–966 (VPREESLNPRLKSEG). Residues 984–987 (NPAY) carry the NPXY motif motif. Tyr987 carries the phosphotyrosine modification. Positions 1004–1115 (SFARAPIPPT…PASTFLEEVA (112 aa)) are disordered. Pro residues-rich tracts occupy residues 1049–1060 (LPPPDFPPPPLP) and 1088–1104 (GPPPPKAHPRPPLPPGT). Ser1132 is modified (phosphoserine). 2 positions are modified to phosphotyrosine: Tyr1136 and Tyr1161. Residues 1195–1257 (LGEAGMGAWL…LLLDTLQLSK (63 aa)) enclose the SAM domain. Residue Ser1256 is modified to Phosphoserine.

This sequence belongs to the inositol 1,4,5-trisphosphate 5-phosphatase family. As to quaternary structure, interacts with tyrosine phosphorylated form of SHC1. Interacts with EGFR. Upon stimulation by the EGF signaling pathway, it forms a complex with SHC1 and EGFR. Interacts with cytoskeletal protein SORBS3/vinexin, promoting its localization to the periphery of cells. Forms a complex with filamin (FLNA or FLNB), actin, GPIb (GP1BA or GP1BB) that regulates cortical and submembraneous actin. Interacts with c-Met/MET, when c-Met/MET is phosphorylated on 'Tyr-1356'. Interacts with p130Cas/BCAR1. Interacts with CENTD3/ARAP3 via its SAM domain. Interacts with c-Cbl/CBL and CAP/SORBS1. Interacts with activated EPHA2 receptor. Interacts with receptors FCGR2A. Interacts with FCGR2B. Interacts with tyrosine kinase ABL1. Interacts with tyrosine kinase TEC. Interacts with CSF1R. Interacts (via N-terminus) with SH3YL1 (via SH3 domain). Interacts (via SH2 domain) with tyrosine phosphorylated KLRC1 (via ITIM). Interacts with NEDD9/HEF1. Tyrosine phosphorylated by the members of the SRC family after exposure to a diverse array of extracellular stimuli such as insulin, growth factors such as EGF or PDGF, chemokines, integrin ligands and hypertonic and oxidative stress. May be phosphorylated upon IgG receptor FCGR2B-binding. Phosphorylated at Tyr-987 following cell attachment and spreading. Phosphorylated at Tyr-1161 following EGF signaling pathway stimulation.

Its subcellular location is the cytoplasm. It localises to the cytosol. The protein localises to the cytoskeleton. It is found in the membrane. The protein resides in the cell projection. Its subcellular location is the filopodium. It localises to the lamellipodium. The protein localises to the basal cell membrane. It is found in the nucleus. The protein resides in the nucleus speckle. Its subcellular location is the spindle pole. The catalysed reaction is a 1,2-diacyl-sn-glycero-3-phospho-(1D-myo-inositol-3,4,5-trisphosphate) + H2O = a 1,2-diacyl-sn-glycero-3-phospho-(1D-myo-inositol-3,4-bisphosphate) + phosphate. The enzyme catalyses 1,2-dioctanoyl-sn-glycero-3-phospho-(1D-myo-inositol-3,4,5-trisphosphate) + H2O = 1,2-dioctanoyl-sn-glycero-3-phospho-(1D-myo-inositol-3,4-bisphosphate) + phosphate. It carries out the reaction 1,2-dihexadecanoyl-sn-glycero-3-phospho-(1D-myo-inositol-3,4,5-trisphosphate) + H2O = 1,2-dihexadecanoyl-sn-glycero-3-phospho-(1D-myo-inositol-3,4-bisphosphate) + phosphate. Its activity is regulated as follows. Activated upon translocation to the sites of synthesis of PtdIns(3,4,5)P3 in the membrane. Enzymatic activity is enhanced in the presence of phosphatidylserine. Its function is as follows. Phosphatidylinositol (PtdIns) phosphatase that specifically hydrolyzes the 5-phosphate of phosphatidylinositol-3,4,5-trisphosphate (PtdIns(3,4,5)P3) to produce PtdIns(3,4)P2, thereby negatively regulating the PI3K (phosphoinositide 3-kinase) pathways. Required for correct mitotic spindle orientation and therefore progression of mitosis. Plays a central role in regulation of PI3K-dependent insulin signaling, although the precise molecular mechanisms and signaling pathways remain unclear. While overexpression reduces both insulin-stimulated MAP kinase and Akt activation, its absence does not affect insulin signaling or GLUT4 trafficking. Confers resistance to dietary obesity. May act by regulating AKT2, but not AKT1, phosphorylation at the plasma membrane. Part of a signaling pathway that regulates actin cytoskeleton remodeling. Required for the maintenance and dynamic remodeling of actin structures as well as in endocytosis, having a major impact on ligand-induced EGFR internalization and degradation. Participates in regulation of cortical and submembraneous actin by hydrolyzing PtdIns(3,4,5)P3 thereby regulating membrane ruffling. Regulates cell adhesion and cell spreading. Required for HGF-mediated lamellipodium formation, cell scattering and spreading. Acts as a negative regulator of EPHA2 receptor endocytosis by inhibiting via PI3K-dependent Rac1 activation. Acts as a regulator of neuritogenesis by regulating PtdIns(3,4,5)P3 level and is required to form an initial protrusive pattern, and later, maintain proper neurite outgrowth. Acts as a negative regulator of the FC-gamma-RIIA receptor (FCGR2A). Mediates signaling from the FC-gamma-RIIB receptor (FCGR2B), playing a central role in terminating signal transduction from activating immune/hematopoietic cell receptor systems. Involved in EGF signaling pathway. Upon stimulation by EGF, it is recruited by EGFR and dephosphorylates PtdIns(3,4,5)P3. Plays a negative role in regulating the PI3K-PKB pathway, possibly by inhibiting PKB activity. Down-regulates Fc-gamma-R-mediated phagocytosis in macrophages independently of INPP5D/SHIP1. In macrophages, down-regulates NF-kappa-B-dependent gene transcription by regulating macrophage colony-stimulating factor (M-CSF)-induced signaling. Plays a role in the localization of AURKA and NEDD9/HEF1 to the basolateral membrane at interphase in polarized cysts, thereby mediates cell cycle homeostasis, cell polarization and cilia assembly. Additionally promotion of cilia growth is also facilitated by hydrolysis of (PtdIns(3,4,5)P3) to PtdIns(3,4)P2. Promotes formation of apical membrane-initiation sites during the initial stages of lumen formation via Rho family-induced actin filament organization and CTNNB1 localization to cell-cell contacts. May also hydrolyze PtdIns(1,3,4,5)P4, and could thus affect the levels of the higher inositol polyphosphates like InsP6. Involved in endochondral ossification. This chain is Phosphatidylinositol 3,4,5-trisphosphate 5-phosphatase 2, found in Rattus norvegicus (Rat).